Reading from the N-terminus, the 498-residue chain is ATP synthase subunit beta, chloroplastic (498 aa).

172–179 (GGAGVGKT) provides a ligand contact to ATP.

This sequence belongs to the ATPase alpha/beta chains family. In terms of assembly, F-type ATPases have 2 components, CF(1) - the catalytic core - and CF(0) - the membrane proton channel. CF(1) has five subunits: alpha(3), beta(3), gamma(1), delta(1), epsilon(1). CF(0) has four main subunits: a(1), b(1), b'(1) and c(9-12).

The protein localises to the plastid. Its subcellular location is the chloroplast thylakoid membrane. It carries out the reaction ATP + H2O + 4 H(+)(in) = ADP + phosphate + 5 H(+)(out). Produces ATP from ADP in the presence of a proton gradient across the membrane. The catalytic sites are hosted primarily by the beta subunits. This Nicotiana tabacum (Common tobacco) protein is ATP synthase subunit beta, chloroplastic.